Here is a 233-residue protein sequence, read N- to C-terminus: B-cell lymphoma/leukemia 10 (233 aa).

Residue M1 is modified to N-acetylmethionine. Residues 13–101 (LTEVKKDALE…QNFLIQKITD (89 aa)) form the CARD domain. Residues K17, K31, and K63 each participate in a glycyl lysine isopeptide (Lys-Gly) (interchain with G-Cter in ubiquitin) cross-link. The segment covering 130–141 (TNNLSRSNSDES) has biased composition (polar residues). Disordered stretches follow at residues 130–149 (TNNL…KQRP) and 186–233 (SFSS…LSRQ). Phosphoserine is present on S138. Residues 195 to 205 (PGDPGAPPLPP) are compositionally biased toward pro residues.

As to quaternary structure, homomultimer; homooligomerized following recruitment by CARD domain-containing proteins that form a nucleating helical template that recruits BCL10 via CARD-CARD interaction. Self-associates by CARD-CARD interaction and interacts with other CARD-proteins such as CARD9, CARD10, CARD11 and CARD14. Forms a complex with CARD14 and MALT1; resulting in the formation of a CBM (CARD14-BCL10-MALT1) complex. Forms a complex with CARD11 and MALT1; resulting in the formation of a CBM (CARD11-BCL10-MALT1) complex. Forms a complex with CARD9 and MALT1; resulting in the formation of a CBM (CARD9-BCL10-MALT1) complex. Found in a membrane raft complex, at least composed of BCL10, CARD11, DPP4 and IKBKB. Binds caspase-9 with its C-terminal domain. Interacts with TRAF2 and BIRC2/c-IAP2. Interacts with PELI2 and SOCS3; these interactions may be mutually exclusive. Post-translationally, phosphorylated. Phosphorylation results in dissociation from TRAF2 and binding to BIRC2/c-IAP2. Phosphorylated by IKBKB/IKKB. In terms of processing, ubiquitinated via both 'Lys-63'-linked and linear ('Met-1'-linked) polyubiquitin chains in response to T-cell receptor (TCR) activation. Ubiquitination is recognized by IKBKG/NEMO, the regulatory subunit of I-kappa-B kinase (IKK), and is required for TCR-induced NF-kappa-B activation. Linear ubiquitination at Lys-17, Lys-31 and Lys-63 is mediated by RNF31/HOIP; linear ubiquitination is recognized with much higher affinity than 'Lys-63'-linked ubiquitin by IKBKG/NEMO. CARD11 is required for linear ubiquitination by HOIP by promoting the targeting of BCL10 to RNF31/HOIP. Proteolytically cleaved by MALT1; required for T-cell activation.

The protein resides in the cytoplasm. Its subcellular location is the perinuclear region. It is found in the membrane raft. Plays a key role in both adaptive and innate immune signaling by bridging CARD domain-containing proteins to immune activation. Acts by channeling adaptive and innate immune signaling downstream of CARD domain-containing proteins CARD9, CARD11 and CARD14 to activate NF-kappa-B and MAP kinase p38 (MAPK11, MAPK12, MAPK13 and/or MAPK14) pathways which stimulate expression of genes encoding pro-inflammatory cytokines and chemokines. Recruited by activated CARD domain-containing proteins: homooligomerized CARD domain-containing proteins form a nucleating helical template that recruits BCL10 via CARD-CARD interaction, thereby promoting polymerization of BCL10, subsequent recruitment of MALT1 and formation of a CBM complex. This leads to activation of NF-kappa-B and MAP kinase p38 (MAPK11, MAPK12, MAPK13 and/or MAPK14) pathways which stimulate expression of genes encoding pro-inflammatory cytokines and chemokines. Activated by CARD9 downstream of C-type lectin receptors; CARD9-mediated signals are essential for antifungal immunity. Activated by CARD11 downstream of T-cell receptor (TCR) and B-cell receptor (BCR). Promotes apoptosis, pro-caspase-9 maturation and activation of NF-kappa-B via NIK and IKK. The polypeptide is B-cell lymphoma/leukemia 10 (Rattus norvegicus (Rat)).